We begin with the raw amino-acid sequence, 155 residues long: Small ribosomal subunit protein uS7c (155 aa).

It belongs to the universal ribosomal protein uS7 family. In terms of assembly, part of the 30S ribosomal subunit.

The protein resides in the plastid. Its subcellular location is the chloroplast. Its function is as follows. One of the primary rRNA binding proteins, it binds directly to 16S rRNA where it nucleates assembly of the head domain of the 30S subunit. The sequence is that of Small ribosomal subunit protein uS7c (rps7) from Metasequoia glyptostroboides (Dawn redwood).